Reading from the N-terminus, the 442-residue chain is Cyclic 2,3-diphosphoglycerate synthetase (442 aa).

The protein belongs to the cyclic 2,3-diphosphoglycerate synthetase family.

It is found in the cytoplasm. It carries out the reaction (2R)-2,3-bisphosphoglycerate + ATP + H(+) = cyclic (2R)-2,3-bisphosphoglycerate + ADP + phosphate. In terms of biological role, catalyzes the formation of cyclic 2,3-diphosphoglycerate (cDPG) by formation of an intramolecular phosphoanhydride bond at the expense of ATP. The polypeptide is Cyclic 2,3-diphosphoglycerate synthetase (Rubrobacter xylanophilus (strain DSM 9941 / JCM 11954 / NBRC 16129 / PRD-1)).